We begin with the raw amino-acid sequence, 282 residues long: Acetyl-coenzyme A carboxylase carboxyl transferase subunit beta (282 aa).

Residues 29 to 282 (LWRTCPKCQR…LMKYGGKQND (254 aa)) enclose the CoA carboxyltransferase N-terminal domain. Residues Cys33, Cys36, Cys51, and Cys54 each contribute to the Zn(2+) site. A C4-type zinc finger spans residues 33 to 54 (CPKCQRTLFAAQMDEYATCPGC).

Belongs to the AccD/PCCB family. As to quaternary structure, acetyl-CoA carboxylase is a heterohexamer composed of biotin carboxyl carrier protein (AccB), biotin carboxylase (AccC) and two subunits each of ACCase subunit alpha (AccA) and ACCase subunit beta (AccD). Zn(2+) is required as a cofactor.

The protein resides in the cytoplasm. It carries out the reaction N(6)-carboxybiotinyl-L-lysyl-[protein] + acetyl-CoA = N(6)-biotinyl-L-lysyl-[protein] + malonyl-CoA. The protein operates within lipid metabolism; malonyl-CoA biosynthesis; malonyl-CoA from acetyl-CoA: step 1/1. Its function is as follows. Component of the acetyl coenzyme A carboxylase (ACC) complex. Biotin carboxylase (BC) catalyzes the carboxylation of biotin on its carrier protein (BCCP) and then the CO(2) group is transferred by the transcarboxylase to acetyl-CoA to form malonyl-CoA. This is Acetyl-coenzyme A carboxylase carboxyl transferase subunit beta from Limosilactobacillus fermentum (strain NBRC 3956 / LMG 18251) (Lactobacillus fermentum).